We begin with the raw amino-acid sequence, 213 residues long: Kynurenine formamidase (213 aa).

Residue Trp-18 participates in substrate binding. 3 residues coordinate Zn(2+): His-48, His-52, and Asp-54. Catalysis depends on His-58, which acts as the Proton donor/acceptor. Zn(2+)-binding residues include His-160 and Glu-172.

This sequence belongs to the Cyclase 1 superfamily. KynB family. In terms of assembly, homodimer. Requires Zn(2+) as cofactor.

It carries out the reaction N-formyl-L-kynurenine + H2O = L-kynurenine + formate + H(+). It functions in the pathway amino-acid degradation; L-tryptophan degradation via kynurenine pathway; L-kynurenine from L-tryptophan: step 2/2. Catalyzes the hydrolysis of N-formyl-L-kynurenine to L-kynurenine, the second step in the kynurenine pathway of tryptophan degradation. The polypeptide is Kynurenine formamidase (Burkholderia pseudomallei (strain 668)).